The chain runs to 67 residues: Preprofallaxidin-4 (67 aa).

The signal sequence occupies residues 1 to 22 (MASLKKFLFLVLFLGMVSLSIC). The propeptide occupies 23 to 46 (DKEKREGENEEEEEEHEEESEEKR). The tract at residues 24-48 (KEKREGENEEEEEEHEEESEEKRGL) is disordered. The span at 30 to 42 (ENEEEEEEHEEES) shows a compositional bias: acidic residues.

This sequence belongs to the frog skin active peptide (FSAP) family. Dermaseptin subfamily. As to expression, expressed by the skin glands.

It is found in the secreted. The sequence is that of Preprofallaxidin-4 from Litoria fallax (Eastern dwarf tree frog).